The primary structure comprises 101 residues: Small ribosomal subunit protein uS14A (101 aa).

A disordered region spans residues 32 to 71; that stretch reads RRPGTPEPERNRAVEELRRQPRDASATRVRNRDSVDGRPR. Composition is skewed to basic and acidic residues over residues 38 to 53 and 61 to 70; these read EPER…RQPR and RNRDSVDGRP.

Belongs to the universal ribosomal protein uS14 family. Part of the 30S ribosomal subunit. Contacts proteins S3 and S10.

Functionally, binds 16S rRNA, required for the assembly of 30S particles and may also be responsible for determining the conformation of the 16S rRNA at the A site. This Streptomyces griseus subsp. griseus (strain JCM 4626 / CBS 651.72 / NBRC 13350 / KCC S-0626 / ISP 5235) protein is Small ribosomal subunit protein uS14A.